The sequence spans 464 residues: 3-isopropylmalate dehydratase large subunit (464 aa).

3 residues coordinate [4Fe-4S] cluster: Cys337, Cys397, and Cys400.

Belongs to the aconitase/IPM isomerase family. LeuC type 1 subfamily. As to quaternary structure, heterodimer of LeuC and LeuD. The cofactor is [4Fe-4S] cluster.

It catalyses the reaction (2R,3S)-3-isopropylmalate = (2S)-2-isopropylmalate. It functions in the pathway amino-acid biosynthesis; L-leucine biosynthesis; L-leucine from 3-methyl-2-oxobutanoate: step 2/4. Catalyzes the isomerization between 2-isopropylmalate and 3-isopropylmalate, via the formation of 2-isopropylmaleate. The sequence is that of 3-isopropylmalate dehydratase large subunit from Bacillus mycoides (strain KBAB4) (Bacillus weihenstephanensis).